The following is a 206-amino-acid chain: Probable N-acetyltransferase 14 (206 aa).

Residues 6-206 (LSVREMREDE…TLVREFSKDL (201 aa)) enclose the N-acetyltransferase domain. Residues 57 to 77 (FVLASFALALLLPVFLAVAAV) form a helical membrane-spanning segment.

The protein belongs to the camello family. In terms of tissue distribution, expressed in K-562 and HeLa cell lines and in brain.

The protein resides in the membrane. In terms of biological role, probable acetyltransferase. Functionally, may act as a transcription factor that regulates the expression of coproporphyrinogen oxidase by binding to a promoter regulatory element. This Homo sapiens (Human) protein is Probable N-acetyltransferase 14 (NAT14).